The following is a 144-amino-acid chain: Transcription antitermination protein NusB (144 aa).

It belongs to the NusB family.

Functionally, involved in transcription antitermination. Required for transcription of ribosomal RNA (rRNA) genes. Binds specifically to the boxA antiterminator sequence of the ribosomal RNA (rrn) operons. The sequence is that of Transcription antitermination protein NusB from Dictyoglomus turgidum (strain DSM 6724 / Z-1310).